The primary structure comprises 179 residues: Transcriptional repressor NrdR (179 aa).

Residues 3 to 34 (CPYCQHTNSRVLESRSSEGGQSIRRRRECLCC) fold into a zinc finger. Positions 49-139 (ITVIKHDGKK…VYGRFQGIKD (91 aa)) constitute an ATP-cone domain. Residues 160–179 (KPANDDFSEQETPSTVMMPS) are disordered. Residues 169–179 (QETPSTVMMPS) are compositionally biased toward polar residues.

It belongs to the NrdR family. Requires Zn(2+) as cofactor.

Negatively regulates transcription of bacterial ribonucleotide reductase nrd genes and operons by binding to NrdR-boxes. This Rippkaea orientalis (strain PCC 8801 / RF-1) (Cyanothece sp. (strain PCC 8801)) protein is Transcriptional repressor NrdR.